A 276-amino-acid polypeptide reads, in one-letter code: MMSDEQHQGGDGQTTTNTNTVAYRAQPVVPMDIFTFQNLRMQPGYAPNSTKQINLYYWWGDHETTCPDYTQVTTAWVVGWVKSSKIRAMKMPEGSTDEPTYSLDLDIRDGTGQLKIIQLKTTLGANGRQSNYDENGGVLQRNSPFKENQYYSFVLKPALQRQAPQQQEQLTTIQGYLVSYHEIVNHNEITTHLSDFVKAYHRMQSNFRYFIHKVIRAYSVNDIAVSLDVIQSHLKDIMSEEQNTSQQLVDYLQYLVSEKQILTQTDSGYMFIKEQQ.

The disordered stretch occupies residues Met1–Thr20.

This is an uncharacterized protein from Dictyostelium discoideum (Social amoeba).